The chain runs to 396 residues: Elongation factor Tu (396 aa).

The tr-type G domain occupies 10–205 (KSHANIGTIG…AVDEYIPTPE (196 aa)). A G1 region spans residues 19 to 26 (GHVDHGKT). 19–26 (GHVDHGKT) is a binding site for GTP. Thr26 provides a ligand contact to Mg(2+). The G2 stretch occupies residues 61–65 (GITIS). Residues 82-85 (DCPG) form a G3 region. Residues 82-86 (DCPGH) and 137-140 (NKCD) contribute to the GTP site. The tract at residues 137–140 (NKCD) is G4. The segment at 175–177 (SAL) is G5. At Thr385 the chain carries Phosphothreonine.

The protein belongs to the TRAFAC class translation factor GTPase superfamily. Classic translation factor GTPase family. EF-Tu/EF-1A subfamily. Monomer. Interacts with BrxC. Phosphorylated on Thr-385 in vitro by PrkC in the presence of poly-L-lysine or myelin basic protein, dephosphorylated by PrpC.

It localises to the cytoplasm. It carries out the reaction GTP + H2O = GDP + phosphate + H(+). Functionally, GTP hydrolase that promotes the GTP-dependent binding of aminoacyl-tRNA to the A-site of ribosomes during protein biosynthesis. This is Elongation factor Tu from Bacillus subtilis (strain 168).